The chain runs to 489 residues: Serine/threonine-protein kinase BSK3 (489 aa).

G2 carries the N-myristoyl glycine lipid modification. Positions E58 to M324 constitute a Protein kinase domain. ATP is bound by residues H64–V72 and K86. D180 serves as the catalytic Proton acceptor. S212 is modified (phosphoserine).

Belongs to the protein kinase superfamily. Ser/Thr protein kinase family. Interacts with BRI1. Post-translationally, phosphorylated by BRI1 upon brassinolide (BL) treatment. Phosphorylated by ASK7/BIN2 and ASK9/BIL2.

Its subcellular location is the cell membrane. It carries out the reaction L-seryl-[protein] + ATP = O-phospho-L-seryl-[protein] + ADP + H(+). The enzyme catalyses L-threonyl-[protein] + ATP = O-phospho-L-threonyl-[protein] + ADP + H(+). Functionally, probable serine/threonine kinase that acts as a positive regulator of brassinosteroid (BR) signaling downstream of the receptor kinase BRI1. Mediates signal transduction from BRI1 by functioning as substrate of BRI1. Functions redundantly with BSK4, BSK6, BSK7 and BSK8. In Arabidopsis thaliana (Mouse-ear cress), this protein is Serine/threonine-protein kinase BSK3.